The following is a 150-amino-acid chain: Early 4 ORF6/7 control protein (150 aa).

The disordered stretch occupies residues 1-31 (MTTSGVPFGMTLRPTRSRLSRRTPYSRDRLP). Positions 1-58 (MTTSGVPFGMTLRPTRSRLSRRTPYSRDRLPPFETETRATILEDHPLLPECNTLTMHN) match the Nuclear localization signal motif.

Belongs to the adenoviridae E4-orf6/7 family. In terms of assembly, interacts with host E2F proteins.

Its subcellular location is the host nucleus. Modulates viral and host transcriptional activity to promote viral genome replication. Stimulates viral E2a promoter activity by binding and inducing dimerization of host E2F. During viral infection E1A protein binds to cellular retinablastoma (RB) family members and dissociates these repressors from a complex with E2F proteins. Free E2F is then bound to E4orf6/7 which leads to transactivation of viral E2 promoter, and cellular promoters such as E2F-1 promoter. Activation of cellular E2F targets promote cell cycle S phase and thereby possibly favorises viral DNA replication process. The chain is Early 4 ORF6/7 control protein from Human adenovirus C serotype 2 (HAdV-2).